We begin with the raw amino-acid sequence, 565 residues long: Oxygen-dependent choline dehydrogenase (565 aa).

7–36 is an FAD binding site; it reads DYIICGAGSAGNVLATRLTEDPGVTVLLLE. The active-site Proton acceptor is the histidine 474.

Belongs to the GMC oxidoreductase family. FAD is required as a cofactor.

It catalyses the reaction choline + A = betaine aldehyde + AH2. It carries out the reaction betaine aldehyde + NAD(+) + H2O = glycine betaine + NADH + 2 H(+). It participates in amine and polyamine biosynthesis; betaine biosynthesis via choline pathway; betaine aldehyde from choline (cytochrome c reductase route): step 1/1. Its function is as follows. Involved in the biosynthesis of the osmoprotectant glycine betaine. Catalyzes the oxidation of choline to betaine aldehyde and betaine aldehyde to glycine betaine at the same rate. In Burkholderia mallei (strain ATCC 23344), this protein is Oxygen-dependent choline dehydrogenase.